Reading from the N-terminus, the 533-residue chain is Bifunctional purine biosynthesis protein PurH (533 aa).

The region spanning 1–148 is the MGS-like domain; the sequence is MQPNRPIRQA…KNHQDVAIVV (148 aa).

Belongs to the PurH family.

The enzyme catalyses (6R)-10-formyltetrahydrofolate + 5-amino-1-(5-phospho-beta-D-ribosyl)imidazole-4-carboxamide = 5-formamido-1-(5-phospho-D-ribosyl)imidazole-4-carboxamide + (6S)-5,6,7,8-tetrahydrofolate. It catalyses the reaction IMP + H2O = 5-formamido-1-(5-phospho-D-ribosyl)imidazole-4-carboxamide. It participates in purine metabolism; IMP biosynthesis via de novo pathway; 5-formamido-1-(5-phospho-D-ribosyl)imidazole-4-carboxamide from 5-amino-1-(5-phospho-D-ribosyl)imidazole-4-carboxamide (10-formyl THF route): step 1/1. Its pathway is purine metabolism; IMP biosynthesis via de novo pathway; IMP from 5-formamido-1-(5-phospho-D-ribosyl)imidazole-4-carboxamide: step 1/1. The chain is Bifunctional purine biosynthesis protein PurH from Pasteurella multocida (strain Pm70).